A 156-amino-acid polypeptide reads, in one-letter code: Small ribosomal subunit protein uS7 (156 aa).

This sequence belongs to the universal ribosomal protein uS7 family. In terms of assembly, part of the 30S ribosomal subunit. Contacts proteins S9 and S11.

In terms of biological role, one of the primary rRNA binding proteins, it binds directly to 16S rRNA where it nucleates assembly of the head domain of the 30S subunit. Is located at the subunit interface close to the decoding center, probably blocks exit of the E-site tRNA. This is Small ribosomal subunit protein uS7 from Wigglesworthia glossinidia brevipalpis.